Consider the following 247-residue polypeptide: Triosephosphate isomerase (247 aa).

Position 10–12 (10–12 (NWK)) interacts with substrate. His92 (electrophile) is an active-site residue. The active-site Proton acceptor is the Glu164. Residues Gly170, Ser209, and 230–231 (GG) contribute to the substrate site.

The protein belongs to the triosephosphate isomerase family. Homodimer.

The protein localises to the cytoplasm. It catalyses the reaction D-glyceraldehyde 3-phosphate = dihydroxyacetone phosphate. Its pathway is carbohydrate biosynthesis; gluconeogenesis. It participates in carbohydrate degradation; glycolysis; D-glyceraldehyde 3-phosphate from glycerone phosphate: step 1/1. Its function is as follows. Involved in the gluconeogenesis. Catalyzes stereospecifically the conversion of dihydroxyacetone phosphate (DHAP) to D-glyceraldehyde-3-phosphate (G3P). The protein is Triosephosphate isomerase of Alcanivorax borkumensis (strain ATCC 700651 / DSM 11573 / NCIMB 13689 / SK2).